A 292-amino-acid polypeptide reads, in one-letter code: NAD kinase (292 aa).

Asp73 functions as the Proton acceptor in the catalytic mechanism. NAD(+) is bound by residues 73 to 74, 147 to 148, His158, Arg175, Asp177, 188 to 193, and Gln247; these read DG, NE, and TAYSLS.

This sequence belongs to the NAD kinase family. It depends on a divalent metal cation as a cofactor.

The protein resides in the cytoplasm. It catalyses the reaction NAD(+) + ATP = ADP + NADP(+) + H(+). In terms of biological role, involved in the regulation of the intracellular balance of NAD and NADP, and is a key enzyme in the biosynthesis of NADP. Catalyzes specifically the phosphorylation on 2'-hydroxyl of the adenosine moiety of NAD to yield NADP. This chain is NAD kinase, found in Pectobacterium atrosepticum (strain SCRI 1043 / ATCC BAA-672) (Erwinia carotovora subsp. atroseptica).